The following is a 207-amino-acid chain: Small heat shock protein hspG7 (207 aa).

The sHSP domain maps to Lys-30–Asn-207. Low complexity-rich tracts occupy residues Gln-84 to Thr-101 and Ser-122 to Thr-135. The tract at residues Gln-84–Asp-149 is disordered. A compositionally biased stretch (basic and acidic residues) spans Lys-136–Asp-149.

Belongs to the small heat shock protein (HSP20) family.

This chain is Small heat shock protein hspG7 (hspG7), found in Dictyostelium discoideum (Social amoeba).